A 635-amino-acid chain; its full sequence is Probable potassium transport system protein Kup (635 aa).

12 consecutive transmembrane segments (helical) span residues 20-40 (MALVIGAIGVVFGDIGTSPLY), 62-82 (VLSLAFWALMITVTLKYVTII), 111-131 (AYVVGILGIFGASLFFGDGVI), 149-169 (PSLHPFIVPITVVVLLVVFMV), 180-200 (VFGPITCLWFLSLGAIGIWNI), 223-243 (GWHGVFILGAVVLAVTGGEAL), 259-279 (WYFFVLPMLLLNYLGQGALVL), 292-312 (AVPSWALYPMIILATLAAVIA), 349-369 (IYVPGINWLLMVMVIALVLIF), 377-397 (VAYGISVSMTMLIDTLLLALV), 408-428 (WVLPLCVVFFIIELAFVIANG), and 429-449 (AKLLQGAWFPLALGIVVFTLM).

Belongs to the HAK/KUP transporter (TC 2.A.72) family.

The protein localises to the cell inner membrane. It catalyses the reaction K(+)(in) + H(+)(in) = K(+)(out) + H(+)(out). In terms of biological role, transport of potassium into the cell. Likely operates as a K(+):H(+) symporter. In Xanthomonas campestris pv. campestris (strain 8004), this protein is Probable potassium transport system protein Kup.